Here is a 67-residue protein sequence, read N- to C-terminus: Large ribosomal subunit protein eL24 (67 aa).

Zn(2+) is bound by residues Cys-7, Cys-10, Cys-33, and Cys-37. The C4-type zinc finger occupies 7-37; sequence CSYCGKEFEPGTGKMYVRNDGRVYFFCSRKC.

It belongs to the eukaryotic ribosomal protein eL24 family. Part of the 50S ribosomal subunit. Forms a cluster with proteins L3 and L14. Zn(2+) is required as a cofactor.

Functionally, binds to the 23S rRNA. The polypeptide is Large ribosomal subunit protein eL24 (Thermococcus sibiricus (strain DSM 12597 / MM 739)).